The sequence spans 432 residues: Short/branched chain specific acyl-CoA dehydrogenase, mitochondrial (432 aa).

A mitochondrion-targeting transit peptide spans 1–33 (MEGLAVRLLRGSRLLRRNFPTCLSSWKIPPHVS). Lys-70 is subject to N6-acetyllysine; alternate. The residue at position 70 (Lys-70) is an N6-succinyllysine; alternate. FAD-binding positions include 174–183 (FCLSEAGAGS) and 207–209 (WIS). Position 183 (Ser-183) interacts with substrate. Ser-183 carries the post-translational modification Phosphoserine. The substrate site is built by Tyr-229 and Tyr-283. Position 284 is an N6-acetyllysine; alternate (Lys-284). Position 284 is an N6-succinyllysine; alternate (Lys-284). Residue 291–294 (NEGR) coordinates substrate. FAD-binding positions include Arg-319, Gln-330, and 387–391 (EWMGG). The Proton acceptor role is filled by Glu-414. 416-418 (ASN) is an FAD binding site. At Lys-426 the chain carries N6-acetyllysine.

Belongs to the acyl-CoA dehydrogenase family. In terms of assembly, homotetramer. FAD serves as cofactor.

It localises to the mitochondrion matrix. It carries out the reaction 2-methylbutanoyl-CoA + oxidized [electron-transfer flavoprotein] + H(+) = (2E)-2-methylbut-2-enoyl-CoA + reduced [electron-transfer flavoprotein]. It catalyses the reaction (2S)-2-methylbutanoyl-CoA + oxidized [electron-transfer flavoprotein] + H(+) = (2E)-2-methylbut-2-enoyl-CoA + reduced [electron-transfer flavoprotein]. The enzyme catalyses (2R)-2-methylbutanoyl-CoA + oxidized [electron-transfer flavoprotein] + H(+) = ethylacryloyl-CoA + reduced [electron-transfer flavoprotein]. The catalysed reaction is butanoyl-CoA + oxidized [electron-transfer flavoprotein] + H(+) = (2E)-butenoyl-CoA + reduced [electron-transfer flavoprotein]. It carries out the reaction 2-methylpropanoyl-CoA + oxidized [electron-transfer flavoprotein] + H(+) = 2-methylpropenoyl-CoA + reduced [electron-transfer flavoprotein]. It catalyses the reaction hexanoyl-CoA + oxidized [electron-transfer flavoprotein] + H(+) = (2E)-hexenoyl-CoA + reduced [electron-transfer flavoprotein]. The enzyme catalyses valproyl-CoA + oxidized [electron-transfer flavoprotein] + H(+) = (2E)-2-propylpent-2-enoyl-CoA + reduced [electron-transfer flavoprotein]. It functions in the pathway lipid metabolism; mitochondrial fatty acid beta-oxidation. Its pathway is amino-acid degradation; L-isoleucine degradation. Its function is as follows. Short and branched chain specific acyl-CoA dehydrogenase that catalyzes the removal of one hydrogen from C-2 and C-3 of the fatty acyl-CoA thioester, resulting in the formation of trans-2-enoyl-CoA. Among the different mitochondrial acyl-CoA dehydrogenases, acts specifically on short and branched chain acyl-CoA derivatives such as (S)-2-methylbutyryl-CoA as well as short straight chain acyl-CoAs such as butyryl-CoA. Plays an important role in the metabolism of L-isoleucine by catalyzing the dehydrogenation of 2-methylbutyryl-CoA, one of the steps of the L-isoleucine catabolic pathway. Can also act on valproyl-CoA, a metabolite of the valproic acid drug. The sequence is that of Short/branched chain specific acyl-CoA dehydrogenase, mitochondrial (ACADSB) from Pongo abelii (Sumatran orangutan).